The chain runs to 434 residues: ATP-dependent RNA helicase SUB2 (434 aa).

Positions 1-16 (MSGEEDLIDYSDDELN) are enriched in acidic residues. The tract at residues 1–32 (MSGEEDLIDYSDDELNNETTAPASNGKKGDAA) is disordered. Positions 50–78 (TGFRDFLLKPELLRAIADCGFEHPSEVQQ) match the Q motif motif. The Helicase ATP-binding domain occupies 81-256 (IPQAMLGGDI…RKFMQNPTEH (176 aa)). 94–101 (AKSGLGKT) is an ATP binding site. A DEAD box motif is present at residues 203 to 206 (DECD). Residues 268 to 429 (GLQQYYIPLE…EFPKEGIDAS (162 aa)) form the Helicase C-terminal domain.

Belongs to the DEAD box helicase family. DECD subfamily.

Its subcellular location is the nucleus. The catalysed reaction is ATP + H2O = ADP + phosphate + H(+). Its function is as follows. ATP-binding RNA helicase involved in transcription elongation and required for the export of mRNA out of the nucleus. SUB2 also plays a role in pre-mRNA splicing and spliceosome assembly. May be involved in rDNA and telomeric silencing, and maintenance of genome integrity. This is ATP-dependent RNA helicase SUB2 (SUB2) from Chaetomium globosum (strain ATCC 6205 / CBS 148.51 / DSM 1962 / NBRC 6347 / NRRL 1970) (Soil fungus).